A 181-amino-acid chain; its full sequence is Oligoribonuclease (181 aa).

Residues 8-171 enclose the Exonuclease domain; sequence LIWLDLEMTG…DDIKESIAEL (164 aa). The active site involves tyrosine 129.

Belongs to the oligoribonuclease family.

The protein resides in the cytoplasm. 3'-to-5' exoribonuclease specific for small oligoribonucleotides. The chain is Oligoribonuclease from Colwellia psychrerythraea (strain 34H / ATCC BAA-681) (Vibrio psychroerythus).